A 375-amino-acid chain; its full sequence is Succinyl-diaminopimelate desuccinylase (375 aa).

Position 66 (histidine 66) interacts with Zn(2+). The active site involves aspartate 68. Aspartate 99 contacts Zn(2+). Glutamate 133 acts as the Proton acceptor in catalysis. Zn(2+) contacts are provided by glutamate 134, glutamate 162, and histidine 348.

The protein belongs to the peptidase M20A family. DapE subfamily. As to quaternary structure, homodimer. Zn(2+) serves as cofactor. Requires Co(2+) as cofactor.

It carries out the reaction N-succinyl-(2S,6S)-2,6-diaminopimelate + H2O = (2S,6S)-2,6-diaminopimelate + succinate. The protein operates within amino-acid biosynthesis; L-lysine biosynthesis via DAP pathway; LL-2,6-diaminopimelate from (S)-tetrahydrodipicolinate (succinylase route): step 3/3. Functionally, catalyzes the hydrolysis of N-succinyl-L,L-diaminopimelic acid (SDAP), forming succinate and LL-2,6-diaminopimelate (DAP), an intermediate involved in the bacterial biosynthesis of lysine and meso-diaminopimelic acid, an essential component of bacterial cell walls. This Cronobacter sakazakii (strain ATCC BAA-894) (Enterobacter sakazakii) protein is Succinyl-diaminopimelate desuccinylase.